The following is a 579-amino-acid chain: Insulin-like growth factor 2 mRNA-binding protein 3 (579 aa).

RRM domains are found at residues 2–75 and 81–156; these read NKLY…HSVP and RKLQ…YIPD. The interval 158-192 is disordered; it reads TAAQQNPSPQLRGRRGPGQRGSSRQASPGSVSKQK. Ser-165 carries the phosphoserine modification. Ser-184 bears the Phosphoserine; by MTOR mark. KH domains lie at 195–260, 276–343, and 405–470; these read DLPL…CKSI, EIPL…EEEI, and TETV…QGRI. Glycyl lysine isopeptide (Lys-Gly) (interchain with G-Cter in SUMO2) cross-links involve residues Lys-450 and Lys-475. A KH 4 domain is found at 487–553; sequence KLEAHIRVPS…YACQVAQRKI (67 aa). Thr-528 is subject to Phosphothreonine.

This sequence belongs to the RRM IMP/VICKZ family. Can form homooligomers and heterooligomers with IGF2BP1 and IGF2BP3 in an RNA-dependent manner. Interacts with IGF2BP1. Interacts with ELAVL1, DHX9, HNRNPU, MATR3 and PABPC1. As to expression, expressed in oocytes, spermatogonia and spermatocytes (at protein level).

The protein resides in the nucleus. Its subcellular location is the cytoplasm. It is found in the P-body. The protein localises to the stress granule. In terms of biological role, RNA-binding factor that may recruit target transcripts to cytoplasmic protein-RNA complexes (mRNPs). This transcript 'caging' into mRNPs allows mRNA transport and transient storage. It also modulates the rate and location at which target transcripts encounter the translational apparatus and shields them from endonuclease attacks or microRNA-mediated degradation. Preferentially binds to N6-methyladenosine (m6A)-containing mRNAs and increases their stability. Binds to the 3'-UTR of CD44 mRNA and stabilizes it, hence promotes cell adhesion and invadopodia formation. Binds to beta-actin/ACTB and MYC transcripts. Increases MYC mRNA stability by binding to the coding region instability determinant (CRD) and binding is enhanced by m6A-modification of the CRD. Binds to the 5'-UTR of the insulin-like growth factor 2 (IGF2) mRNAs. This Mus musculus (Mouse) protein is Insulin-like growth factor 2 mRNA-binding protein 3 (Igf2bp3).